Reading from the N-terminus, the 273-residue chain is 2-dehydro-3-deoxyphosphooctonate aldolase (273 aa).

It belongs to the KdsA family.

The protein localises to the cytoplasm. The enzyme catalyses D-arabinose 5-phosphate + phosphoenolpyruvate + H2O = 3-deoxy-alpha-D-manno-2-octulosonate-8-phosphate + phosphate. It functions in the pathway carbohydrate biosynthesis; 3-deoxy-D-manno-octulosonate biosynthesis; 3-deoxy-D-manno-octulosonate from D-ribulose 5-phosphate: step 2/3. Its pathway is bacterial outer membrane biogenesis; lipopolysaccharide biosynthesis. The chain is 2-dehydro-3-deoxyphosphooctonate aldolase from Nitratidesulfovibrio vulgaris (strain ATCC 29579 / DSM 644 / CCUG 34227 / NCIMB 8303 / VKM B-1760 / Hildenborough) (Desulfovibrio vulgaris).